Consider the following 436-residue polypeptide: MSWSLQPPSFLLCCLLLLFSPTGLAYVATRDNCCILDERFGSFCPTTCGIADFLSSYQTDVDNDLRTLEDILFRAENRTTEAKELIKAIQVYYNPDQPPKPGMIDSATQKSKKMVEEIVKYEALLLTHETSIRYLQEIYNSNNQKITNLKQKVAQLEAQCQEPCKDSVQIHDTTGKDCQEIANKGAKESGLYFIRPLKAKQQFLVYCEIDGSGNGWTVLQKRIDGSLDFKKNWIQYKEGFGHLSPTGTTEFWLGNEKIHLISMQSTIPYALRIQLKDWNGRTSTADYAMFRVGPESDKYRLTYAYFIGGDAGDAFDGYDFGDDPSDKFFTSHNGMQFSTWDNDNDKFEGNCAEQDGSGWWMNKCHAGHLNGVYHQGGTYSKSSTTNGFDDGIIWATWKSRWYSMKETTMKIIPFNRLSIGEGQQHHMGGSKQAGDV.

The signal sequence occupies residues M1–A25. N77 carries an N-linked (GlcNAc...) asparagine glycan. Residues Q169–N415 form the Fibrinogen C-terminal domain. C178 and C207 are oxidised to a cystine. The Ca(2+) site is built by D343, D345, and G349. A disulfide bridge connects residues C351 and C364. An Isoglutamyl lysine isopeptide (Gln-Lys) (interchain with K-431) cross-link involves residue Q423. Residue S430 is modified to Phosphoserine. K431 participates in a covalent cross-link: Isoglutamyl lysine isopeptide (Lys-Gln) (interchain with Q-423).

Heterohexamer; disulfide linked. Contains 2 sets of 3 non-identical chains (alpha, beta and gamma). The 2 heterotrimers are in head to head conformation with the N-termini in a small central domain. Post-translationally, conversion of fibrinogen to fibrin is triggered by thrombin, which cleaves fibrinopeptides A and B from alpha and beta chains, and thus exposes the N-terminal polymerization sites responsible for the formation of the soft clot. The soft clot is converted into the hard clot by factor XIIIA which catalyzes the epsilon-(gamma-glutamyl)lysine cross-linking between gamma chains (stronger) and between alpha chains (weaker) of different monomers.

The protein resides in the secreted. In terms of biological role, together with fibrinogen alpha (FGA) and fibrinogen beta (FGB), polymerizes to form an insoluble fibrin matrix. Fibrin has a major function in hemostasis as one of the primary components of blood clots. In addition, functions during the early stages of wound repair to stabilize the lesion and guide cell migration during re-epithelialization. Was originally thought to be essential for platelet aggregation, based on in vitro studies using anticoagulated blood. However, subsequent studies have shown that it is not absolutely required for thrombus formation in vivo. Enhances expression of SELP in activated platelets via an ITGB3-dependent pathway. Maternal fibrinogen is essential for successful pregnancy. Fibrin deposition is also associated with infection, where it protects against IFNG-mediated hemorrhage. May also facilitate the immune response via both innate and T-cell mediated pathways. The polypeptide is Fibrinogen gamma chain (Fgg) (Mus musculus (Mouse)).